We begin with the raw amino-acid sequence, 56 residues long: VTGPAPLKFAGVNIAGFDYDALVQAXLNXGYLDSDNSGTLAINTETGGGNTASXVE.

Glu45 (nucleophile) is an active-site residue.

The protein belongs to the glycosyl hydrolase 5 (cellulase A) family.

Its subcellular location is the secreted. It is found in the extracellular space. It catalyses the reaction Endohydrolysis of (1-&gt;4)-beta-D-glucosidic linkages in cellulose, lichenin and cereal beta-D-glucans.. Its function is as follows. Has avicelase and carboxymethylcellulase activity. The polypeptide is Endoglucanase Cel5A (Gloeophyllum trabeum (Brown rot fungus)).